The sequence spans 529 residues: ATP synthase subunit alpha (529 aa).

173–180 (GDRQTGKT) contributes to the ATP binding site.

Belongs to the ATPase alpha/beta chains family. F-type ATPases have 2 components, CF(1) - the catalytic core - and CF(0) - the membrane proton channel. CF(1) has five subunits: alpha(3), beta(3), gamma(1), delta(1), epsilon(1). CF(0) has three main subunits: a(1), b(2) and c(9-12). The alpha and beta chains form an alternating ring which encloses part of the gamma chain. CF(1) is attached to CF(0) by a central stalk formed by the gamma and epsilon chains, while a peripheral stalk is formed by the delta and b chains.

The protein resides in the cell membrane. It catalyses the reaction ATP + H2O + 4 H(+)(in) = ADP + phosphate + 5 H(+)(out). Its function is as follows. Produces ATP from ADP in the presence of a proton gradient across the membrane. The alpha chain is a regulatory subunit. The chain is ATP synthase subunit alpha from Streptomyces lividans.